Reading from the N-terminus, the 63-residue chain is Large ribosomal subunit protein bL28 (63 aa).

Residues 1–20 form a disordered region; that stretch reads MSKRCAITGKGPMVGNNVSH.

The protein belongs to the bacterial ribosomal protein bL28 family.

The chain is Large ribosomal subunit protein bL28 from Campylobacter concisus (strain 13826).